We begin with the raw amino-acid sequence, 518 residues long: Ribonuclease Y (518 aa).

The helical transmembrane segment at 2 to 22 threads the bilayer; that stretch reads VLNILLAIVGLIVGLGLGFVI. Residues 91–119 are disordered; that stretch reads QREQTLDRKDDSLEKREGSLEEKEEKLGA. Residues 208–268 form the KH domain; that stretch reads TVSVVTLPND…IRREIARMTL (61 aa). Positions 334 to 427 constitute an HD domain; that stretch reads VLNHSIEVAK…VAAADALSAA (94 aa).

The protein belongs to the RNase Y family.

Its subcellular location is the cell membrane. Functionally, endoribonuclease that initiates mRNA decay. The polypeptide is Ribonuclease Y (Enterococcus faecalis (strain ATCC 700802 / V583)).